The primary structure comprises 85 residues: Senescence-associated and QQS-related protein (85 aa).

Residues 1–24 (MSFRKVEKKPTEMGRNMTHEKSDS) are compositionally biased toward basic and acidic residues. 2 disordered regions span residues 1–35 (MSFR…PMTV) and 55–85 (SGKA…FPNY). Polar residues predominate over residues 58 to 77 (ARSNYNLTGTAKGTGPINSF).

As to expression, expressed predominantly within leaves and cotyledons vasculatures. Mainly observed in fully expanded leaves, at the base of mature inflorescences, in senescing leaves and cauline leaves, and, to a lower extent, in hypocotyls and rosette leaves prior to flowering.

Its function is as follows. Plays a role in carbon allocation, including during senescence and stresses, thus impacting starch accumulation. In Arabidopsis thaliana (Mouse-ear cress), this protein is Senescence-associated and QQS-related protein.